Here is a 640-residue protein sequence, read N- to C-terminus: WW domain-binding protein 11 (640 aa).

The span at 1–11 shows a compositional bias: polar residues; it reads MGRRSTSSTKS. The segment at 1–37 is disordered; that stretch reads MGRRSTSSTKSGKFMNPTDQARKEARKRELKKNKKQR. Residues 28–37 are compositionally biased toward basic residues; that stretch reads RELKKNKKQR. Residues 75–122 adopt a coiled-coil conformation; the sequence is EKVLRDKRKKLRETFERIVRLYERENPETYKELRKLELEYETKRGQLS. Disordered regions lie at residues 155–174, 187–563, and 582–625; these read DIPLPGAQPPSILKKSSALG, VPRL…ISAK, and RVRR…LKTK. Over residues 194 to 207 the composition is skewed to pro residues; the sequence is RKPPGPPPGPPPPQ. Residues 230–240 are compositionally biased toward basic and acidic residues; it reads DGGRDSDSKSE. Acidic residues predominate over residues 241–251; sequence ADEESDSQEDS. The segment covering 252-274 has biased composition (basic and acidic residues); that stretch reads SAEREDSDRGERDEERERADKHT. S285 is modified (phosphoserine). Residues 315–338 show a composition bias toward acidic residues; the sequence is PEEEEEDEEEEYSESEDSEAEDQA. Positions 356–371 are enriched in low complexity; sequence APMAAQQPPSLMQAPP. Pro residues-rich tracts occupy residues 372 to 412 and 422 to 491; these read ITGP…PPGL and RLLP…PPLN. A PGR motif is present at residues 421–432; it reads PRLLPPGPPPGR. Residues 547–558 are compositionally biased toward gly residues; sequence GSGGASAQGGGA. A compositionally biased stretch (basic and acidic residues) spans 586-599; sequence DRAGGTGRREEERP. A compositionally biased stretch (low complexity) spans 603–616; sequence QQTPAHQAPPIAHA.

The protein localises to the cytoplasm. It is found in the nucleus. In terms of biological role, activates pre-mRNA splicing. This Danio rerio (Zebrafish) protein is WW domain-binding protein 11 (wbp11).